A 456-amino-acid polypeptide reads, in one-letter code: uncharacterized protein (456 aa).

In terms of domain architecture, TRAM spans 3 to 61 (LMRKNETREFLIEDIEFPAVGVAFYNDKKVYIKGAVPGQKVLARVSKVRREKIEAKLKE). 4 residues coordinate [4Fe-4S] cluster: Cys74, Cys80, Cys83, and Cys163. S-adenosyl-L-methionine-binding residues include Gln289, Tyr318, Glu339, and Asp384. Residue Cys411 is the Nucleophile of the active site.

Belongs to the class I-like SAM-binding methyltransferase superfamily. RNA M5U methyltransferase family.

This is an uncharacterized protein from Clostridium acetobutylicum (strain ATCC 824 / DSM 792 / JCM 1419 / IAM 19013 / LMG 5710 / NBRC 13948 / NRRL B-527 / VKM B-1787 / 2291 / W).